A 380-amino-acid chain; its full sequence is UDP-N-acetylglucosamine--N-acetylmuramyl-(pentapeptide) pyrophosphoryl-undecaprenol N-acetylglucosamine transferase (380 aa).

UDP-N-acetyl-alpha-D-glucosamine is bound by residues 23–25 (TGG), N137, R178, S210, I266, and Q311.

It belongs to the glycosyltransferase 28 family. MurG subfamily.

The protein resides in the cell inner membrane. It carries out the reaction di-trans,octa-cis-undecaprenyl diphospho-N-acetyl-alpha-D-muramoyl-L-alanyl-D-glutamyl-meso-2,6-diaminopimeloyl-D-alanyl-D-alanine + UDP-N-acetyl-alpha-D-glucosamine = di-trans,octa-cis-undecaprenyl diphospho-[N-acetyl-alpha-D-glucosaminyl-(1-&gt;4)]-N-acetyl-alpha-D-muramoyl-L-alanyl-D-glutamyl-meso-2,6-diaminopimeloyl-D-alanyl-D-alanine + UDP + H(+). It participates in cell wall biogenesis; peptidoglycan biosynthesis. Its function is as follows. Cell wall formation. Catalyzes the transfer of a GlcNAc subunit on undecaprenyl-pyrophosphoryl-MurNAc-pentapeptide (lipid intermediate I) to form undecaprenyl-pyrophosphoryl-MurNAc-(pentapeptide)GlcNAc (lipid intermediate II). This Bacteroides fragilis (strain ATCC 25285 / DSM 2151 / CCUG 4856 / JCM 11019 / LMG 10263 / NCTC 9343 / Onslow / VPI 2553 / EN-2) protein is UDP-N-acetylglucosamine--N-acetylmuramyl-(pentapeptide) pyrophosphoryl-undecaprenol N-acetylglucosamine transferase.